The chain runs to 193 residues: Xanthine phosphoribosyltransferase (193 aa).

Xanthine-binding residues include Leu-20 and Asn-27. 129-133 (ANGKA) provides a ligand contact to 5-phospho-alpha-D-ribose 1-diphosphate. Lys-157 contributes to the xanthine binding site.

The protein belongs to the purine/pyrimidine phosphoribosyltransferase family. Xpt subfamily. Homodimer.

It localises to the cytoplasm. It carries out the reaction XMP + diphosphate = xanthine + 5-phospho-alpha-D-ribose 1-diphosphate. It functions in the pathway purine metabolism; XMP biosynthesis via salvage pathway; XMP from xanthine: step 1/1. Functionally, converts the preformed base xanthine, a product of nucleic acid breakdown, to xanthosine 5'-monophosphate (XMP), so it can be reused for RNA or DNA synthesis. The polypeptide is Xanthine phosphoribosyltransferase (Bifidobacterium longum subsp. infantis (strain ATCC 15697 / DSM 20088 / JCM 1222 / NCTC 11817 / S12)).